We begin with the raw amino-acid sequence, 383 residues long: S-adenosylmethionine synthase (383 aa).

An ATP-binding site is contributed by histidine 15. Residue aspartate 17 coordinates Mg(2+). Glutamate 43 provides a ligand contact to K(+). 2 residues coordinate L-methionine: glutamate 56 and glutamine 99. Positions glutamine 99–arginine 109 are flexible loop. Residues aspartate 164 to lysine 166, arginine 230 to phenylalanine 231, aspartate 239, arginine 245 to lysine 246, alanine 262, and lysine 266 each bind ATP. Aspartate 239 lines the L-methionine pocket. An L-methionine-binding site is contributed by lysine 270.

The protein belongs to the AdoMet synthase family. Homotetramer; dimer of dimers. It depends on Mg(2+) as a cofactor. The cofactor is K(+).

It is found in the cytoplasm. The enzyme catalyses L-methionine + ATP + H2O = S-adenosyl-L-methionine + phosphate + diphosphate. It functions in the pathway amino-acid biosynthesis; S-adenosyl-L-methionine biosynthesis; S-adenosyl-L-methionine from L-methionine: step 1/1. Catalyzes the formation of S-adenosylmethionine (AdoMet) from methionine and ATP. The overall synthetic reaction is composed of two sequential steps, AdoMet formation and the subsequent tripolyphosphate hydrolysis which occurs prior to release of AdoMet from the enzyme. The chain is S-adenosylmethionine synthase from Shewanella baltica (strain OS155 / ATCC BAA-1091).